Consider the following 370-residue polypeptide: Dihydrolipoyllysine-residue acetyltransferase component of acetoin cleaving system (370 aa).

In terms of domain architecture, Lipoyl-binding spans 4 to 79 (IHTLTMPKWG…PVGALLAVVV (76 aa)). N6-lipoyllysine is present on lysine 45. Residues 135-355 (PLVLVHGFGG…EAGHMVQMEA (221 aa)) form the AB hydrolase-1 domain.

(R)-lipoate serves as cofactor.

It catalyses the reaction N(6)-[(R)-dihydrolipoyl]-L-lysyl-[protein] + acetyl-CoA = N(6)-[(R)-S(8)-acetyldihydrolipoyl]-L-lysyl-[protein] + CoA. Its pathway is ketone degradation; acetoin degradation. This chain is Dihydrolipoyllysine-residue acetyltransferase component of acetoin cleaving system (acoC), found in Pseudomonas putida (Arthrobacter siderocapsulatus).